A 976-amino-acid chain; its full sequence is R3H domain-containing protein 2 (976 aa).

Disordered regions lie at residues 32 to 71 and 105 to 147; these read ISKT…AKSN and ISCP…QEYT. A compositionally biased stretch (basic and acidic residues) spans 36–56; sequence PSKEEIEKECEDTSLRQETQR. At Ser-37 the chain carries Phosphoserine. Residues 58 to 71 are compositionally biased toward basic residues; it reads TSNHGHARKRAKSN. A compositionally biased stretch (basic and acidic residues) spans 109-143; the sequence is SDKEEEKSTKDVSEKEDKDKNKEKIPRKMLSRDSS. Ser-143 carries the phosphoserine modification. Positions 169-232 constitute an R3H domain; sequence RMMLLKLEQE…AVIINKTSNT (64 aa). The 78-residue stretch at 233–310 folds into the SUZ domain; it reads RIPEQRFSEH…NREGLSRTSS (78 aa). Residues 257–269 show a composition bias toward basic and acidic residues; sequence LKRDDASMDRDDN. 5 disordered regions span residues 257 to 376, 401 to 457, 480 to 560, 661 to 725, and 738 to 780; these read LKRD…ISRP, CTAQ…EAAD, ASTG…PGLQ, GTSP…PSMV, and RGQK…SLSS. Low complexity predominate over residues 306 to 317; the sequence is SRTSSSRQSSTD. Phosphoserine occurs at positions 330, 333, and 349. Low complexity predominate over residues 401-415; the sequence is CTAQQQQQQQQQQLP. Polar residues-rich tracts occupy residues 441 to 453 and 480 to 504; these read PFGQ…QGST and ASTG…QQVL. The segment covering 543 to 560 has biased composition (low complexity); that stretch reads SPQRGQQLPQPSQQPGLQ. The span at 682 to 691 shows a compositional bias: pro residues; that stretch reads SPSPCSPPQM. Residues 692-714 are compositionally biased toward low complexity; that stretch reads PQQYSGVSPSGPGVVVMQLNVPN. Residues 748 to 758 show a composition bias toward polar residues; the sequence is PDSSPQANTQM. Positions 759–777 are enriched in low complexity; it reads SSSPVTSPTQSPAPSPVTS. Phosphoserine occurs at positions 853 and 855. Thr-856 and Thr-860 each carry phosphothreonine.

Its subcellular location is the nucleus. This chain is R3H domain-containing protein 2 (R3HDM2), found in Homo sapiens (Human).